Here is a 357-residue protein sequence, read N- to C-terminus: Protein pelota homolog (357 aa).

Belongs to the eukaryotic release factor 1 family. Pelota subfamily. As to quaternary structure, monomer. It depends on a divalent metal cation as a cofactor.

The protein resides in the cytoplasm. Its function is as follows. May function in recognizing stalled ribosomes, interact with stem-loop structures in stalled mRNA molecules, and effect endonucleolytic cleavage of the mRNA. May play a role in the release non-functional ribosomes and degradation of damaged mRNAs. Has endoribonuclease activity. The polypeptide is Protein pelota homolog (Thermococcus gammatolerans (strain DSM 15229 / JCM 11827 / EJ3)).